Here is a 96-residue protein sequence, read N- to C-terminus: Aspartyl/glutamyl-tRNA(Asn/Gln) amidotransferase subunit C (96 aa).

This sequence belongs to the GatC family. As to quaternary structure, heterotrimer of A, B and C subunits.

It carries out the reaction L-glutamyl-tRNA(Gln) + L-glutamine + ATP + H2O = L-glutaminyl-tRNA(Gln) + L-glutamate + ADP + phosphate + H(+). The catalysed reaction is L-aspartyl-tRNA(Asn) + L-glutamine + ATP + H2O = L-asparaginyl-tRNA(Asn) + L-glutamate + ADP + phosphate + 2 H(+). Functionally, allows the formation of correctly charged Asn-tRNA(Asn) or Gln-tRNA(Gln) through the transamidation of misacylated Asp-tRNA(Asn) or Glu-tRNA(Gln) in organisms which lack either or both of asparaginyl-tRNA or glutaminyl-tRNA synthetases. The reaction takes place in the presence of glutamine and ATP through an activated phospho-Asp-tRNA(Asn) or phospho-Glu-tRNA(Gln). This chain is Aspartyl/glutamyl-tRNA(Asn/Gln) amidotransferase subunit C, found in Bacillus cytotoxicus (strain DSM 22905 / CIP 110041 / 391-98 / NVH 391-98).